The following is a 451-amino-acid chain: Bifunctional protein GlmU (451 aa).

The interval 1-225 is pyrophosphorylase; sequence MVVVAILAAG…YQEILGINDR (225 aa). UDP-N-acetyl-alpha-D-glucosamine is bound by residues 7-10, K21, Q72, and 77-78; these read LAAG and GT. Residue D102 coordinates Mg(2+). G139, E154, N169, and N223 together coordinate UDP-N-acetyl-alpha-D-glucosamine. N223 serves as a coordination point for Mg(2+). Residues 226–246 are linker; sequence LQLATAYEILQRRVKEQWMMA. Residues 247–451 form an N-acetyltransferase region; it reads GVTLIDPNSI…PGWRKKSGES (205 aa). 2 residues coordinate UDP-N-acetyl-alpha-D-glucosamine: R328 and K346. Catalysis depends on H358, which acts as the Proton acceptor. UDP-N-acetyl-alpha-D-glucosamine contacts are provided by Y361 and N372. Residues A375, 381 to 382, S400, A418, and R435 each bind acetyl-CoA; that span reads NY.

It in the N-terminal section; belongs to the N-acetylglucosamine-1-phosphate uridyltransferase family. The protein in the C-terminal section; belongs to the transferase hexapeptide repeat family. In terms of assembly, homotrimer. Mg(2+) is required as a cofactor.

The protein localises to the cytoplasm. It carries out the reaction alpha-D-glucosamine 1-phosphate + acetyl-CoA = N-acetyl-alpha-D-glucosamine 1-phosphate + CoA + H(+). The enzyme catalyses N-acetyl-alpha-D-glucosamine 1-phosphate + UTP + H(+) = UDP-N-acetyl-alpha-D-glucosamine + diphosphate. It functions in the pathway nucleotide-sugar biosynthesis; UDP-N-acetyl-alpha-D-glucosamine biosynthesis; N-acetyl-alpha-D-glucosamine 1-phosphate from alpha-D-glucosamine 6-phosphate (route II): step 2/2. It participates in nucleotide-sugar biosynthesis; UDP-N-acetyl-alpha-D-glucosamine biosynthesis; UDP-N-acetyl-alpha-D-glucosamine from N-acetyl-alpha-D-glucosamine 1-phosphate: step 1/1. The protein operates within bacterial outer membrane biogenesis; LPS lipid A biosynthesis. Catalyzes the last two sequential reactions in the de novo biosynthetic pathway for UDP-N-acetylglucosamine (UDP-GlcNAc). The C-terminal domain catalyzes the transfer of acetyl group from acetyl coenzyme A to glucosamine-1-phosphate (GlcN-1-P) to produce N-acetylglucosamine-1-phosphate (GlcNAc-1-P), which is converted into UDP-GlcNAc by the transfer of uridine 5-monophosphate (from uridine 5-triphosphate), a reaction catalyzed by the N-terminal domain. The polypeptide is Bifunctional protein GlmU (Trichormus variabilis (strain ATCC 29413 / PCC 7937) (Anabaena variabilis)).